A 61-amino-acid polypeptide reads, in one-letter code: LECYQMSKVVTCKPEETFCYSDVFMPFRNHIVYTSGCSSYCRDGTGEKCCTTDRCNGARGG.

4 cysteine pairs are disulfide-bonded: cysteine 3–cysteine 19, cysteine 12–cysteine 37, cysteine 41–cysteine 49, and cysteine 50–cysteine 55.

Belongs to the three-finger toxin family. Short-chain subfamily. Orphan group XX sub-subfamily. As to expression, expressed by the venom gland.

It localises to the secreted. The protein is Weak toxin CM-2a of Naja annulifera (Banded Egyptian cobra).